A 369-amino-acid chain; its full sequence is Glutamate 5-kinase (369 aa).

Position 11 (K11) interacts with ATP. Residues S51, D138, and N150 each contribute to the substrate site. ATP-binding positions include 170–171 (TD) and 212–218 (TGGMATK). Residues 277 to 355 (KGSIVIDEGA…QDIYAVLGYE (79 aa)) form the PUA domain.

It belongs to the glutamate 5-kinase family.

The protein localises to the cytoplasm. The enzyme catalyses L-glutamate + ATP = L-glutamyl 5-phosphate + ADP. It functions in the pathway amino-acid biosynthesis; L-proline biosynthesis; L-glutamate 5-semialdehyde from L-glutamate: step 1/2. Catalyzes the transfer of a phosphate group to glutamate to form L-glutamate 5-phosphate. The chain is Glutamate 5-kinase from Aliivibrio fischeri (strain ATCC 700601 / ES114) (Vibrio fischeri).